The following is an 84-amino-acid chain: Sec-independent protein translocase protein TatA (84 aa).

The chain crosses the membrane as a helical span at residues 1–21 (MGGISIWQLLIIAVIVILLFG). A disordered region spans residues 40–84 (KKAMSDEDKPADKKDADFEPKNIEQQKTEASAETTAETKKDKEQA). 2 stretches are compositionally biased toward basic and acidic residues: residues 42–66 (AMSDEDKPADKKDADFEPKNIEQQK) and 75–84 (AETKKDKEQA).

The protein belongs to the TatA/E family. The Tat system comprises two distinct complexes: a TatABC complex, containing multiple copies of TatA, TatB and TatC subunits, and a separate TatA complex, containing only TatA subunits. Substrates initially bind to the TatABC complex, which probably triggers association of the separate TatA complex to form the active translocon.

The protein resides in the cell inner membrane. In terms of biological role, part of the twin-arginine translocation (Tat) system that transports large folded proteins containing a characteristic twin-arginine motif in their signal peptide across membranes. TatA could form the protein-conducting channel of the Tat system. This Vibrio atlanticus (strain LGP32) (Vibrio splendidus (strain Mel32)) protein is Sec-independent protein translocase protein TatA.